We begin with the raw amino-acid sequence, 481 residues long: 6-phosphogluconate dehydrogenase, decarboxylating (481 aa).

NADP(+) is bound by residues 11–16, 34–36, 76–78, and Asn-104; these read GLAVMG, NRT, and VKA. Substrate-binding positions include Asn-104 and 130–132; that span reads SGG. Lys-184 acts as the Proton acceptor in catalysis. Residue 187–188 coordinates substrate; sequence HN. Glu-191 serves as the catalytic Proton donor. Substrate contacts are provided by Tyr-192, Lys-259, Arg-286, Arg-445, and His-451.

It belongs to the 6-phosphogluconate dehydrogenase family. Homodimer.

The enzyme catalyses 6-phospho-D-gluconate + NADP(+) = D-ribulose 5-phosphate + CO2 + NADPH. It functions in the pathway carbohydrate degradation; pentose phosphate pathway; D-ribulose 5-phosphate from D-glucose 6-phosphate (oxidative stage): step 3/3. Catalyzes the oxidative decarboxylation of 6-phosphogluconate to ribulose 5-phosphate and CO(2), with concomitant reduction of NADP to NADPH. The polypeptide is 6-phosphogluconate dehydrogenase, decarboxylating (Pgd) (Drosophila melanogaster (Fruit fly)).